The sequence spans 91 residues: Small ribosomal subunit protein bS18 (91 aa).

Belongs to the bacterial ribosomal protein bS18 family. Part of the 30S ribosomal subunit. Forms a tight heterodimer with protein bS6.

Functionally, binds as a heterodimer with protein bS6 to the central domain of the 16S rRNA, where it helps stabilize the platform of the 30S subunit. The sequence is that of Small ribosomal subunit protein bS18 from Gluconacetobacter diazotrophicus (strain ATCC 49037 / DSM 5601 / CCUG 37298 / CIP 103539 / LMG 7603 / PAl5).